The chain runs to 317 residues: Phospho-N-acetylmuramoyl-pentapeptide-transferase (317 aa).

The next 9 helical transmembrane spans lie at 4–24 (LIYSVLIAFFIAMLEGPILIP), 49–69 (TPTMGGIIFILATFITMAVIV), 76–96 (AMIALYAFIGFGIIGAIDDTL), 112–132 (MILLLAISGIFAYYSANNPYI), 147–167 (LGVFYIPFIIVYFAATTNAVN), 186–206 (FLALVSFAMGHITLAVFCAIL), 223–243 (IFMGDTGSLALGGAIGAVAMI), 246–266 (LPLLVIIIGGIYVLEALSVIF), and 297–317 (RVVSVFCIVTVILCLVGFLSL).

It belongs to the glycosyltransferase 4 family. MraY subfamily. Mg(2+) is required as a cofactor.

The protein resides in the cell membrane. The enzyme catalyses UDP-N-acetyl-alpha-D-muramoyl-L-alanyl-gamma-D-glutamyl-meso-2,6-diaminopimeloyl-D-alanyl-D-alanine + di-trans,octa-cis-undecaprenyl phosphate = di-trans,octa-cis-undecaprenyl diphospho-N-acetyl-alpha-D-muramoyl-L-alanyl-D-glutamyl-meso-2,6-diaminopimeloyl-D-alanyl-D-alanine + UMP. Its pathway is cell wall biogenesis; peptidoglycan biosynthesis. In terms of biological role, catalyzes the initial step of the lipid cycle reactions in the biosynthesis of the cell wall peptidoglycan: transfers peptidoglycan precursor phospho-MurNAc-pentapeptide from UDP-MurNAc-pentapeptide onto the lipid carrier undecaprenyl phosphate, yielding undecaprenyl-pyrophosphoryl-MurNAc-pentapeptide, known as lipid I. The polypeptide is Phospho-N-acetylmuramoyl-pentapeptide-transferase (Clostridium kluyveri (strain NBRC 12016)).